The chain runs to 154 residues: Interleukin-2 (154 aa).

An N-terminal signal peptide occupies residues Met-1–Ser-20. Thr-23 carries O-linked (GalNAc...) threonine glycosylation. Cys-78 and Cys-126 are oxidised to a cystine.

This sequence belongs to the IL-2 family.

The protein localises to the secreted. In terms of biological role, cytokine produced by activated CD4-positive helper T-cells and to a lesser extend activated CD8-positive T-cells and natural killer (NK) cells that plays pivotal roles in the immune response and tolerance. Binds to a receptor complex composed of either the high-affinity trimeric IL-2R (IL2RA/CD25, IL2RB/CD122 and IL2RG/CD132) or the low-affinity dimeric IL-2R (IL2RB and IL2RG). Interaction with the receptor leads to oligomerization and conformation changes in the IL-2R subunits resulting in downstream signaling starting with phosphorylation of JAK1 and JAK3. In turn, JAK1 and JAK3 phosphorylate the receptor to form a docking site leading to the phosphorylation of several substrates including STAT5. This process leads to activation of several pathways including STAT, phosphoinositide-3-kinase/PI3K and mitogen-activated protein kinase/MAPK pathways. Functions as a T-cell growth factor and can increase NK-cell cytolytic activity as well. Promotes strong proliferation of activated B-cells and subsequently immunoglobulin production. Plays a pivotal role in regulating the adaptive immune system by controlling the survival and proliferation of regulatory T-cells, which are required for the maintenance of immune tolerance. Moreover, participates in the differentiation and homeostasis of effector T-cell subsets, including Th1, Th2, Th17 as well as memory CD8-positive T-cells. This is Interleukin-2 (IL2) from Papio anubis (Olive baboon).